A 47-amino-acid polypeptide reads, in one-letter code: Bifunctional chitinase/lysozyme (47 aa).

The 47-residue stretch at G1–A47 folds into the GH18 domain.

It belongs to the glycosyl hydrolase 18 family. Chitinase class II subfamily.

Its subcellular location is the secreted. It is found in the extracellular space. The enzyme catalyses Random endo-hydrolysis of N-acetyl-beta-D-glucosaminide (1-&gt;4)-beta-linkages in chitin and chitodextrins.. It carries out the reaction Hydrolysis of (1-&gt;4)-beta-linkages between N-acetylmuramic acid and N-acetyl-D-glucosamine residues in a peptidoglycan and between N-acetyl-D-glucosamine residues in chitodextrins.. Its function is as follows. Bifunctional enzyme with lysozyme/chitinase activity. This Parthenocissus quinquefolia (Virginia creeper) protein is Bifunctional chitinase/lysozyme.